The primary structure comprises 80 residues: MKIKDAVNMIRWEYREKIDDYVIIIIDRLTENGLKEISFSELDAVDNNYLYLKSEENTVIPLHRVLMIKRKSDNALIWKR.

It belongs to the UPF0248 family.

This is UPF0248 protein YG5714_2801 from Saccharolobus islandicus (strain Y.G.57.14 / Yellowstone #1) (Sulfolobus islandicus).